The primary structure comprises 799 residues: Ribonucleoside-diphosphate reductase large subunit (799 aa).

Residues threonine 192, 207–208, glycine 238, 408–412, and 612–616 each bind substrate; these read SC, NLCAE, and PTAGT. The cysteines at positions 208 and 424 are disulfide-linked. The active-site Proton acceptor is asparagine 408. Cysteine 410 functions as the Cysteine radical intermediate in the catalytic mechanism. Glutamate 412 (proton acceptor) is an active-site residue. Residues 765-799 are disordered; the sequence is PDSGDGVGGYKGGDEEPRSPEHAQCESPDRCLSCQ. Residues 776-793 are compositionally biased toward basic and acidic residues; the sequence is GGDEEPRSPEHAQCESPD.

It belongs to the ribonucleoside diphosphate reductase large chain family. Heterotetramer composed of a homodimer of the large subunit (R1) and a homodimer of the small subunit (R2). Larger multisubunit protein complex are also active, composed of (R1)n(R2)n.

The enzyme catalyses a 2'-deoxyribonucleoside 5'-diphosphate + [thioredoxin]-disulfide + H2O = a ribonucleoside 5'-diphosphate + [thioredoxin]-dithiol. Its function is as follows. Ribonucleoside-diphosphate reductase holoenzyme provides the precursors necessary for viral DNA synthesis. Allows virus growth in non-dividing cells, as well as reactivation from latency in infected hosts. Catalyzes the biosynthesis of deoxyribonucleotides from the corresponding ribonucleotides. This is Ribonucleoside-diphosphate reductase large subunit from Equine herpesvirus 2 (strain 86/87) (EHV-2).